The chain runs to 415 residues: Gamma-glutamyl phosphate reductase (415 aa).

The protein belongs to the gamma-glutamyl phosphate reductase family.

The protein localises to the cytoplasm. The enzyme catalyses L-glutamate 5-semialdehyde + phosphate + NADP(+) = L-glutamyl 5-phosphate + NADPH + H(+). Its pathway is amino-acid biosynthesis; L-proline biosynthesis; L-glutamate 5-semialdehyde from L-glutamate: step 2/2. Catalyzes the NADPH-dependent reduction of L-glutamate 5-phosphate into L-glutamate 5-semialdehyde and phosphate. The product spontaneously undergoes cyclization to form 1-pyrroline-5-carboxylate. This Parabacteroides distasonis (strain ATCC 8503 / DSM 20701 / CIP 104284 / JCM 5825 / NCTC 11152) protein is Gamma-glutamyl phosphate reductase.